Here is a 244-residue protein sequence, read N- to C-terminus: Orotidine 5'-phosphate decarboxylase (244 aa).

Substrate is bound by residues Asp-20, Lys-42, 70–79 (DLKFFDIPAT), Thr-125, Arg-186, Gln-195, Gly-215, and Arg-216. Residue Lys-72 is the Proton donor of the active site.

This sequence belongs to the OMP decarboxylase family. Type 1 subfamily. Homodimer.

It catalyses the reaction orotidine 5'-phosphate + H(+) = UMP + CO2. It participates in pyrimidine metabolism; UMP biosynthesis via de novo pathway; UMP from orotate: step 2/2. Its function is as follows. Catalyzes the decarboxylation of orotidine 5'-monophosphate (OMP) to uridine 5'-monophosphate (UMP). The sequence is that of Orotidine 5'-phosphate decarboxylase from Xylella fastidiosa (strain M12).